The primary structure comprises 148 residues: Large ribosomal subunit protein bL9 (148 aa).

The protein belongs to the bacterial ribosomal protein bL9 family.

Its function is as follows. Binds to the 23S rRNA. The protein is Large ribosomal subunit protein bL9 of Agathobacter rectalis (strain ATCC 33656 / DSM 3377 / JCM 17463 / KCTC 5835 / VPI 0990) (Eubacterium rectale).